We begin with the raw amino-acid sequence, 439 residues long: GTPase Obg (439 aa).

The Obg domain maps to 5–164 (TDFFDQATIV…LTLELELKML (160 aa)). In terms of domain architecture, OBG-type G spans 165 to 335 (ADVGLVGFPN…LLRRVADLLR (171 aa)). Residues 171 to 178 (GFPNAGKS), 196 to 200 (FTTLT), 217 to 220 (DIPG), 287 to 290 (NKAD), and 316 to 318 (SAA) each bind GTP. Ser178 and Thr198 together coordinate Mg(2+). The OCT domain maps to 356–433 (LPEVDENAFT…IGRAELVWDD (78 aa)).

Belongs to the TRAFAC class OBG-HflX-like GTPase superfamily. OBG GTPase family. Monomer. The cofactor is Mg(2+).

The protein localises to the cytoplasm. Functionally, an essential GTPase which binds GTP, GDP and possibly (p)ppGpp with moderate affinity, with high nucleotide exchange rates and a fairly low GTP hydrolysis rate. Plays a role in control of the cell cycle, stress response, ribosome biogenesis and in those bacteria that undergo differentiation, in morphogenesis control. The polypeptide is GTPase Obg (Chloroflexus aurantiacus (strain ATCC 29364 / DSM 637 / Y-400-fl)).